Here is a 239-residue protein sequence, read N- to C-terminus: Large ribosomal subunit protein uL2 (239 aa).

A disordered region spans residues 200–239 (VNHPHGGKEHHIGRPSTVSRRAPPGRKVGHIAARRTGRRK). Over residues 222–239 (PPGRKVGHIAARRTGRRK) the composition is skewed to basic residues.

This sequence belongs to the universal ribosomal protein uL2 family. Part of the 50S ribosomal subunit. Forms a bridge to the 30S subunit in the 70S ribosome.

One of the primary rRNA binding proteins. Required for association of the 30S and 50S subunits to form the 70S ribosome, for tRNA binding and peptide bond formation. It has been suggested to have peptidyltransferase activity; this is somewhat controversial. Makes several contacts with the 16S rRNA in the 70S ribosome. The chain is Large ribosomal subunit protein uL2 from Thermococcus kodakarensis (strain ATCC BAA-918 / JCM 12380 / KOD1) (Pyrococcus kodakaraensis (strain KOD1)).